Reading from the N-terminus, the 227-residue chain is MVSLKSVLAAATAVSSAIAAPFDFVPRDNSTALQARQVTPNAEGWHNGYFYSWWSDGGGQVQYTNLEGSRYQVRWRNTGNFVGGKGWNPGTGRTINYGGYFNPQGNGYLAVYGWTRNPLVEYYVIESYGTYNPGSQAQYKGTFYTDGDQYDIFVSTRYNQPSIDGTRTFQQYWSIRKNKRVGGSVNMQNHFNAWQQHGMPLGQHYYQVVATEGYQSSGESDIYVQTH.

The N-terminal stretch at Met-1 to Ala-19 is a signal peptide. The 189-residue stretch at Gln-37–Gln-225 folds into the GH11 domain. The Nucleophile role is filled by Glu-121. Glu-212 serves as the catalytic Proton donor.

It belongs to the glycosyl hydrolase 11 (cellulase G) family.

The catalysed reaction is Endohydrolysis of (1-&gt;4)-beta-D-xylosidic linkages in xylans.. It participates in glycan degradation; xylan degradation. This Humicola insolens (Soft-rot fungus) protein is Endo-1,4-beta-xylanase 1.